Reading from the N-terminus, the 91-residue chain is Small ribosomal subunit protein bS18 (91 aa).

It belongs to the bacterial ribosomal protein bS18 family. Part of the 30S ribosomal subunit. Forms a tight heterodimer with protein bS6.

Its function is as follows. Binds as a heterodimer with protein bS6 to the central domain of the 16S rRNA, where it helps stabilize the platform of the 30S subunit. The protein is Small ribosomal subunit protein bS18 of Thiobacillus denitrificans (strain ATCC 25259 / T1).